The chain runs to 438 residues: ATP phosphoribosyltransferase regulatory subunit (438 aa).

It belongs to the class-II aminoacyl-tRNA synthetase family. HisZ subfamily. In terms of assembly, heteromultimer composed of HisG and HisZ subunits.

It localises to the cytoplasm. The protein operates within amino-acid biosynthesis; L-histidine biosynthesis; L-histidine from 5-phospho-alpha-D-ribose 1-diphosphate: step 1/9. Functionally, required for the first step of histidine biosynthesis. May allow the feedback regulation of ATP phosphoribosyltransferase activity by histidine. In Geobacter sulfurreducens (strain ATCC 51573 / DSM 12127 / PCA), this protein is ATP phosphoribosyltransferase regulatory subunit.